Here is a 591-residue protein sequence, read N- to C-terminus: NADPH oxidase 1 (591 aa).

At 1 to 36 (MAGELRGSRGPLQRIQIAPREAPNLHLTMGNWLVNH) the chain is on the cytoplasmic side. The helical transmembrane segment at 37–59 (WLSVLFLVSWLGLNIFLFVYAFL) threads the bilayer. Residues 60 to 72 (NYEKSDKYYYTRE) are Extracellular-facing. The helical transmembrane segment at 73–97 (ILGTALALARASALCLNFNSMMILI) threads the bilayer. Residues 82 to 316 (RASALCLNFN…YIFERILRFY (235 aa)) form the Ferric oxidoreductase domain. The Cytoplasmic portion of the chain corresponds to 98-130 (PVCRNLLSFLRGTCSFCNRTLRKPLDHNLTFHK). The heme site is built by histidine 129 and histidine 143. Residues 131–151 (LVAYMICIFTVIHIIAHLFNF) form a helical membrane-spanning segment. Over 152–195 (ERYRRSQQAMDGSLASVLSSLSHPEKEDSWLNPIQSPNMTVMYA) the chain is Extracellular. Asparagine 189 carries an N-linked (GlcNAc...) asparagine glycan. The chain crosses the membrane as a helical span at residues 196-216 (AFTSIAGLTGVIATVALVLMV). The Cytoplasmic portion of the chain corresponds to 217-234 (TSAMEFIRRNYFELFWYT). The helical transmembrane segment at 235 to 255 (HHLFIVYIICLGIHGLGGIVR) threads the bilayer. Heme is bound by residues histidine 236 and histidine 248. Topologically, residues 256–423 (GQTEESLGES…TVSEDVFQYE (168 aa)) are extracellular. Residue asparagine 269 is glycosylated (N-linked (GlcNAc...) asparagine). The region spanning 317-418 (RSQQKVVITK…DGPFGTVSED (102 aa)) is the FAD-binding FR-type domain. 365-371 (HPFTLTS) is a binding site for FAD. A helical membrane pass occupies residues 424-444 (VAVLVGAGIGVTPFASILKSI). The tract at residues 424–563 (VAVLVGAGIG…GVFLCGPRTL (140 aa)) is interaction with NOXO1. Residues 445-591 (WYKFQRADNK…VQFYFNKETF (147 aa)) are Cytoplasmic-facing. The residue at position 457 (threonine 457) is a Phosphothreonine.

As to quaternary structure, NOX1, NOXA1, NOXO1, RAC1 and CYBA forms a functional multimeric complex supporting ROS production. Interacts with NOXO1. Interacts (via FAD-binding FR-type domain) with ARHGEF7 (via PH domain). Interacts with NOXA1. The cofactor is FAD. In terms of processing, phosphorylation at Thr-457 mediated by PKC/PRKBC positively regulates its interaction with NOXA1 and enzyme activity. As to expression, expressed in colon and vascular smooth muscle cells (VSMC).

Its subcellular location is the cell projection. The protein localises to the invadopodium membrane. The protein resides in the cell membrane. It catalyses the reaction NADPH + 2 O2 = 2 superoxide + NADP(+) + H(+). Its activity is regulated as follows. The oxidase activity is potentiated by NOXA1 and NOXO1. NADPH oxidase that catalyzes the generation of superoxide from molecular oxygen utilizing NADPH as an electron donor. This Mus musculus (Mouse) protein is NADPH oxidase 1 (Nox1).